The following is a 179-amino-acid chain: Bifunctional protein PyrR (179 aa).

The short motif at 100 to 112 is the PRPP-binding element; sequence VILIDDVLFTGRT.

The protein belongs to the purine/pyrimidine phosphoribosyltransferase family. PyrR subfamily.

It carries out the reaction UMP + diphosphate = 5-phospho-alpha-D-ribose 1-diphosphate + uracil. Regulates the transcription of the pyrimidine nucleotide (pyr) operon in response to exogenous pyrimidines. Its function is as follows. Also displays a weak uracil phosphoribosyltransferase activity which is not physiologically significant. The sequence is that of Bifunctional protein PyrR from Mannheimia succiniciproducens (strain KCTC 0769BP / MBEL55E).